We begin with the raw amino-acid sequence, 263 residues long: Orotidine 5'-phosphate decarboxylase (263 aa).

Residues D36, K58–H60, D90–T99, Y216, and R234 contribute to the substrate site. The Proton donor role is filled by K92.

This sequence belongs to the OMP decarboxylase family.

It catalyses the reaction orotidine 5'-phosphate + H(+) = UMP + CO2. Its pathway is pyrimidine metabolism; UMP biosynthesis via de novo pathway; UMP from orotate: step 2/2. This Komagataella pastoris (Yeast) protein is Orotidine 5'-phosphate decarboxylase (URA3).